We begin with the raw amino-acid sequence, 164 residues long: Ferredoxin-type protein NapF (164 aa).

4Fe-4S ferredoxin-type domains follow at residues 28-57, 58-89, and 132-161; these read GDES…RGAG, GYPS…PRHT, and YQPQ…AEYL. [4Fe-4S] cluster-binding residues include Cys37, Cys40, Cys43, Cys47, Cys69, Cys72, Cys75, Cys79, Cys141, Cys144, Cys147, and Cys151.

The protein belongs to the NapF family. Interacts with the cytoplasmic NapA precursor. It depends on [4Fe-4S] cluster as a cofactor.

The protein resides in the cytoplasm. Functionally, could be involved in the maturation of NapA, the catalytic subunit of the periplasmic nitrate reductase, before its export into the periplasm. In Escherichia coli O157:H7, this protein is Ferredoxin-type protein NapF.